The chain runs to 204 residues: Guanylate kinase (204 aa).

A Guanylate kinase-like domain is found at 3–181 (GTLIIITAPS…ALDDLVAVVR (179 aa)). ATP is bound at residue 10–17 (APSGAGKT).

The protein belongs to the guanylate kinase family.

It is found in the cytoplasm. It carries out the reaction GMP + ATP = GDP + ADP. Its function is as follows. Essential for recycling GMP and indirectly, cGMP. In Aromatoleum aromaticum (strain DSM 19018 / LMG 30748 / EbN1) (Azoarcus sp. (strain EbN1)), this protein is Guanylate kinase.